The sequence spans 130 residues: S-adenosylmethionine decarboxylase proenzyme (130 aa).

Ser63 acts as the Schiff-base intermediate with substrate; via pyruvic acid in catalysis. At Ser63 the chain carries Pyruvic acid (Ser); by autocatalysis. Catalysis depends on His68, which acts as the Proton acceptor; for processing activity. Catalysis depends on Cys83, which acts as the Proton donor; for catalytic activity.

This sequence belongs to the prokaryotic AdoMetDC family. Type 1 subfamily. As to quaternary structure, heterotetramer of two alpha and two beta chains arranged as a dimer of alpha/beta heterodimers. The cofactor is pyruvate. Post-translationally, is synthesized initially as an inactive proenzyme. Formation of the active enzyme involves a self-maturation process in which the active site pyruvoyl group is generated from an internal serine residue via an autocatalytic post-translational modification. Two non-identical subunits are generated from the proenzyme in this reaction, and the pyruvate is formed at the N-terminus of the alpha chain, which is derived from the carboxyl end of the proenzyme. The post-translation cleavage follows an unusual pathway, termed non-hydrolytic serinolysis, in which the side chain hydroxyl group of the serine supplies its oxygen atom to form the C-terminus of the beta chain, while the remainder of the serine residue undergoes an oxidative deamination to produce ammonia and the pyruvoyl group blocking the N-terminus of the alpha chain.

It carries out the reaction S-adenosyl-L-methionine + H(+) = S-adenosyl 3-(methylsulfanyl)propylamine + CO2. It functions in the pathway amine and polyamine biosynthesis; S-adenosylmethioninamine biosynthesis; S-adenosylmethioninamine from S-adenosyl-L-methionine: step 1/1. In terms of biological role, catalyzes the decarboxylation of S-adenosylmethionine to S-adenosylmethioninamine (dcAdoMet), the propylamine donor required for the synthesis of the polyamines spermine and spermidine from the diamine putrescine. The protein is S-adenosylmethionine decarboxylase proenzyme of Thermosipho africanus (strain TCF52B).